A 431-amino-acid polypeptide reads, in one-letter code: Hydroxylamine reductase (431 aa).

Cys5, Cys8, Cys17, and Cys23 together coordinate [4Fe-4S] cluster. His131, Glu155, Cys199, Cys286, Cys314, Cys339, Glu373, and Lys375 together coordinate hybrid [4Fe-2O-2S] cluster. Cys286 carries the post-translational modification Cysteine persulfide.

This sequence belongs to the HCP family. Requires [4Fe-4S] cluster as cofactor. The cofactor is hybrid [4Fe-2O-2S] cluster.

It localises to the cytoplasm. It carries out the reaction A + NH4(+) + H2O = hydroxylamine + AH2 + H(+). Functionally, catalyzes the reduction of hydroxylamine to form NH(3) and H(2)O. The chain is Hydroxylamine reductase from Thermotoga petrophila (strain ATCC BAA-488 / DSM 13995 / JCM 10881 / RKU-1).